The sequence spans 97 residues: Citrate lyase acyl carrier protein (97 aa).

Serine 14 is modified (O-(phosphoribosyl dephospho-coenzyme A)serine).

It belongs to the CitD family. Oligomer with a subunit composition of (alpha,beta,gamma)6.

The protein localises to the cytoplasm. Covalent carrier of the coenzyme of citrate lyase. In Escherichia fergusonii (strain ATCC 35469 / DSM 13698 / CCUG 18766 / IAM 14443 / JCM 21226 / LMG 7866 / NBRC 102419 / NCTC 12128 / CDC 0568-73), this protein is Citrate lyase acyl carrier protein.